A 468-amino-acid chain; its full sequence is 3-isopropylmalate dehydratase large subunit (468 aa).

Positions 349, 409, and 412 each coordinate [4Fe-4S] cluster.

It belongs to the aconitase/IPM isomerase family. LeuC type 1 subfamily. As to quaternary structure, heterodimer of LeuC and LeuD. It depends on [4Fe-4S] cluster as a cofactor.

The catalysed reaction is (2R,3S)-3-isopropylmalate = (2S)-2-isopropylmalate. It participates in amino-acid biosynthesis; L-leucine biosynthesis; L-leucine from 3-methyl-2-oxobutanoate: step 2/4. Its function is as follows. Catalyzes the isomerization between 2-isopropylmalate and 3-isopropylmalate, via the formation of 2-isopropylmaleate. The protein is 3-isopropylmalate dehydratase large subunit of Nitrobacter hamburgensis (strain DSM 10229 / NCIMB 13809 / X14).